The chain runs to 183 residues: Putative 3-methyladenine DNA glycosylase (183 aa).

This sequence belongs to the DNA glycosylase MPG family.

The sequence is that of Putative 3-methyladenine DNA glycosylase from Rickettsia peacockii (strain Rustic).